We begin with the raw amino-acid sequence, 122 residues long: Small ribosomal subunit protein uS13 (122 aa).

The tract at residues 94–122 (SLPVRGQRTKTNARTRKVHVSRSKNSRGK) is disordered.

It belongs to the universal ribosomal protein uS13 family. Part of the 30S ribosomal subunit. Forms a loose heterodimer with protein S19. Forms two bridges to the 50S subunit in the 70S ribosome.

Located at the top of the head of the 30S subunit, it contacts several helices of the 16S rRNA. In the 70S ribosome it contacts the 23S rRNA (bridge B1a) and protein L5 of the 50S subunit (bridge B1b), connecting the 2 subunits; these bridges are implicated in subunit movement. Contacts the tRNAs in the A and P-sites. The polypeptide is Small ribosomal subunit protein uS13 (Haemophilus influenzae (strain ATCC 51907 / DSM 11121 / KW20 / Rd)).